The primary structure comprises 126 residues: Integrin alpha-M (126 aa).

Residues asparagine 25, asparagine 78, and asparagine 106 are each glycosylated (N-linked (GlcNAc...) asparagine).

This sequence belongs to the integrin alpha chain family. As to quaternary structure, heterodimer of an alpha and a beta chain. ITGAM associates with ITGB2. Found in a complex with CD177 and ITGB2/CD18. Interacts with JAM3. Interacts with THBD. Interacts with TMEM268; this interaction inhibits ITGAM degradation via the endosome-lysosome pathway.

The protein localises to the cell membrane. It is found in the membrane raft. Its function is as follows. Integrin ITGAM/ITGB2 is implicated in various adhesive interactions of monocytes, macrophages and granulocytes as well as in mediating the uptake of complement-coated particles. It is identical with CR-3, the receptor for the iC3b fragment of the third complement component. It probably recognizes the R-G-D peptide in C3b. Integrin ITGAM/ITGB2 is also a receptor for fibrinogen, factor X and ICAM1. It recognizes P1 and P2 peptides of fibrinogen gamma chain. Regulates neutrophil migration. In association with beta subunit ITGB2/CD18, required for CD177-PRTN3-mediated activation of TNF primed neutrophils. May regulate phagocytosis-induced apoptosis in extravasated neutrophils. May play a role in mast cell development. Required with TYROBP/DAP12 in microglia to control production of microglial superoxide ions which promote the neuronal apoptosis that occurs during brain development. The polypeptide is Integrin alpha-M (ITGAM) (Cavia porcellus (Guinea pig)).